The chain runs to 660 residues: Bifunctional polymyxin resistance protein ArnA (660 aa).

A formyltransferase ArnAFT region spans residues 1–304 (MKTVVFAYHD…TLGLVQGSRL (304 aa)). 86–88 (HLI) is a (6R)-10-formyltetrahydrofolate binding site. H104 acts as the Proton donor; for formyltransferase activity in catalysis. (6R)-10-formyltetrahydrofolate contacts are provided by residues R114 and 136 to 140 (VKRAD). A dehydrogenase ArnADH region spans residues 314–660 (RRTRVLILGV…RTVDLTDKPS (347 aa)). NAD(+) contacts are provided by residues D347 and 368-369 (DI). UDP-alpha-D-glucuronate contacts are provided by residues A393, Y398, and 432–433 (TS). E434 (proton acceptor; for decarboxylase activity) is an active-site residue. UDP-alpha-D-glucuronate contacts are provided by residues R460, N492, 526-535 (KLIDGGKQKR), and Y613. R619 acts as the Proton donor; for decarboxylase activity in catalysis.

This sequence in the N-terminal section; belongs to the Fmt family. UDP-L-Ara4N formyltransferase subfamily. The protein in the C-terminal section; belongs to the NAD(P)-dependent epimerase/dehydratase family. UDP-glucuronic acid decarboxylase subfamily. In terms of assembly, homohexamer, formed by a dimer of trimers.

It catalyses the reaction UDP-alpha-D-glucuronate + NAD(+) = UDP-beta-L-threo-pentopyranos-4-ulose + CO2 + NADH. The enzyme catalyses UDP-4-amino-4-deoxy-beta-L-arabinose + (6R)-10-formyltetrahydrofolate = UDP-4-deoxy-4-formamido-beta-L-arabinose + (6S)-5,6,7,8-tetrahydrofolate + H(+). The protein operates within nucleotide-sugar biosynthesis; UDP-4-deoxy-4-formamido-beta-L-arabinose biosynthesis; UDP-4-deoxy-4-formamido-beta-L-arabinose from UDP-alpha-D-glucuronate: step 1/3. It participates in nucleotide-sugar biosynthesis; UDP-4-deoxy-4-formamido-beta-L-arabinose biosynthesis; UDP-4-deoxy-4-formamido-beta-L-arabinose from UDP-alpha-D-glucuronate: step 3/3. It functions in the pathway bacterial outer membrane biogenesis; lipopolysaccharide biosynthesis. In terms of biological role, bifunctional enzyme that catalyzes the oxidative decarboxylation of UDP-glucuronic acid (UDP-GlcUA) to UDP-4-keto-arabinose (UDP-Ara4O) and the addition of a formyl group to UDP-4-amino-4-deoxy-L-arabinose (UDP-L-Ara4N) to form UDP-L-4-formamido-arabinose (UDP-L-Ara4FN). The modified arabinose is attached to lipid A and is required for resistance to polymyxin and cationic antimicrobial peptides. This is Bifunctional polymyxin resistance protein ArnA from Escherichia coli O81 (strain ED1a).